Reading from the N-terminus, the 550-residue chain is Mitochondrial distribution and morphology protein 34 (550 aa).

One can recognise an SMP-LTD domain in the interval 1-208 (MAFNFNWSPL…CPEQMSKEDH (208 aa)). 3 disordered regions span residues 294 to 313 (VDKPEASSTTPLTTPSLVKS), 358 to 505 (RNAK…ILEQ), and 519 to 550 (VYDEKQRNPSFWDEREDSPPPAYEAQPTTAAS). A compositionally biased stretch (low complexity) spans 300-310 (SSTTPLTTPSL). Over residues 364–376 (ANRKKKTRVVNLR) the composition is skewed to basic residues. 2 stretches are compositionally biased toward polar residues: residues 391-407 (MSDSASVQASESITMSD) and 458-467 (AEISQPQVAR). Basic and acidic residues predominate over residues 481-495 (SENDKRSDSKRRGPR).

This sequence belongs to the MDM34 family. In terms of assembly, component of the ER-mitochondria encounter structure (ERMES) or MDM complex, composed of MMM1, MDM10, MDM12 and MDM34.

The protein localises to the mitochondrion outer membrane. In terms of biological role, component of the ERMES/MDM complex, which serves as a molecular tether to connect the endoplasmic reticulum (ER) and mitochondria. Components of this complex are involved in the control of mitochondrial shape and protein biogenesis, and function in nonvesicular lipid trafficking between the ER and mitochondria. MDM34 is required for the interaction of the ER-resident membrane protein MMM1 and the outer mitochondrial membrane-resident beta-barrel protein MDM10. The polypeptide is Mitochondrial distribution and morphology protein 34 (Pyricularia oryzae (strain 70-15 / ATCC MYA-4617 / FGSC 8958) (Rice blast fungus)).